Consider the following 244-residue polypeptide: tRNA pseudouridine synthase A (244 aa).

Residue aspartate 52 is the Nucleophile of the active site. Position 110 (tyrosine 110) interacts with substrate.

This sequence belongs to the tRNA pseudouridine synthase TruA family. In terms of assembly, homodimer.

It carries out the reaction uridine(38/39/40) in tRNA = pseudouridine(38/39/40) in tRNA. Formation of pseudouridine at positions 38, 39 and 40 in the anticodon stem and loop of transfer RNAs. In Brevibacillus brevis (strain 47 / JCM 6285 / NBRC 100599), this protein is tRNA pseudouridine synthase A.